We begin with the raw amino-acid sequence, 61 residues long: Neurotoxin-like protein 1 (61 aa).

4 disulfide bridges follow: Cys3–Cys24, Cys17–Cys38, Cys42–Cys53, and Cys54–Cys59.

As to expression, expressed by the venom gland.

Its subcellular location is the secreted. In Causus rhombeatus (Rhombic night adder), this protein is Neurotoxin-like protein 1.